A 216-amino-acid chain; its full sequence is Thiamine-phosphate synthase (216 aa).

4-amino-2-methyl-5-(diphosphooxymethyl)pyrimidine-binding positions include glutamine 41–lysine 45 and asparagine 73. Residues aspartate 74 and aspartate 93 each contribute to the Mg(2+) site. Residue serine 111 participates in 4-amino-2-methyl-5-(diphosphooxymethyl)pyrimidine binding. Position 137-139 (threonine 137–threonine 139) interacts with 2-[(2R,5Z)-2-carboxy-4-methylthiazol-5(2H)-ylidene]ethyl phosphate. Lysine 140 contacts 4-amino-2-methyl-5-(diphosphooxymethyl)pyrimidine. 2-[(2R,5Z)-2-carboxy-4-methylthiazol-5(2H)-ylidene]ethyl phosphate is bound by residues glycine 168 and valine 188 to serine 189.

It belongs to the thiamine-phosphate synthase family. Requires Mg(2+) as cofactor.

The catalysed reaction is 2-[(2R,5Z)-2-carboxy-4-methylthiazol-5(2H)-ylidene]ethyl phosphate + 4-amino-2-methyl-5-(diphosphooxymethyl)pyrimidine + 2 H(+) = thiamine phosphate + CO2 + diphosphate. It carries out the reaction 2-(2-carboxy-4-methylthiazol-5-yl)ethyl phosphate + 4-amino-2-methyl-5-(diphosphooxymethyl)pyrimidine + 2 H(+) = thiamine phosphate + CO2 + diphosphate. It catalyses the reaction 4-methyl-5-(2-phosphooxyethyl)-thiazole + 4-amino-2-methyl-5-(diphosphooxymethyl)pyrimidine + H(+) = thiamine phosphate + diphosphate. It functions in the pathway cofactor biosynthesis; thiamine diphosphate biosynthesis; thiamine phosphate from 4-amino-2-methyl-5-diphosphomethylpyrimidine and 4-methyl-5-(2-phosphoethyl)-thiazole: step 1/1. Its function is as follows. Condenses 4-methyl-5-(beta-hydroxyethyl)thiazole monophosphate (THZ-P) and 2-methyl-4-amino-5-hydroxymethyl pyrimidine pyrophosphate (HMP-PP) to form thiamine monophosphate (TMP). The protein is Thiamine-phosphate synthase of Chloroflexus aurantiacus (strain ATCC 29366 / DSM 635 / J-10-fl).